Reading from the N-terminus, the 322-residue chain is 3-alpha-hydroxysteroid dehydrogenase (322 aa).

Blocked amino end (Met) is present on methionine 1. Residues 20-24 (GFGTT) and aspartate 50 contribute to the NADP(+) site. Tyrosine 55 acts as the Proton donor in catalysis. Histidine 117 lines the substrate pocket. Residues 166-167 (SN), glutamine 190, and 216-221 (YCTLGS) each bind NADP(+). Tryptophan 227 serves as a coordination point for substrate. 270–280 (RSFNAKRIKEL) contributes to the NADP(+) binding site.

The protein belongs to the aldo/keto reductase family. As to quaternary structure, monomer. In brain, highest levels found in olfactory bulb. Moderate levels present in cerebellum, cerebral cortex, hypothalamus and pituitary. Low levels present in amygdala, brain stem, caudate putamen, cingulate cortex, hippocampus, midbrain, and thalamus.

Its subcellular location is the cytoplasm. The catalysed reaction is a 3alpha-hydroxysteroid + NADP(+) = a 3-oxosteroid + NADPH + H(+). The enzyme catalyses a 3alpha-hydroxysteroid + NAD(+) = a 3-oxosteroid + NADH + H(+). With respect to regulation, potently inhibited by the nonsteroidal anti-inflammatory drugs (NSAID). Its function is as follows. Besides being a 3-alpha-hydroxysteroid dehydrogenase, the enzyme can accomplish diverse functions: as quinone reductase, as an aromatic alcohol dehydrogenase, as dihydrodiol dehydrogenase, and as 9-, 11-, and 15-hydroxyprostaglandin dehydrogenase. The protein is 3-alpha-hydroxysteroid dehydrogenase (Akr1c9) of Rattus norvegicus (Rat).